Here is a 433-residue protein sequence, read N- to C-terminus: Transcobalamin-1 (433 aa).

The signal sequence occupies residues 1–23; the sequence is MRQSHQLPLVGLLLFSFIPSQLC. The tract at residues 24-310 is globular N-terminal alpha domain; sequence EICEVSEENY…DINKDSSCVS (287 aa). 3 cysteine pairs are disulfide-bonded: C26–C265, C105–C308, and C155–C197. Residue 142-146 coordinates cyanocob(III)alamin; it reads TNYYQ. N-linked (GlcNAc...) asparagine glycosylation occurs at N160. Residue D186 participates in cyanocob(III)alamin binding. The N-linked (GlcNAc...) asparagine glycan is linked to N216. N240 and Q289 together coordinate cyanocob(III)alamin. The interval 311 to 332 is flexible linker; sequence ASGNFNISADEPITVTPPDSQS. N-linked (GlcNAc...) asparagine glycans are attached at residues N316, N337, N343, N349, N354, and N369. A globular C-terminal beta domain region spans residues 333–433; that stretch reads YISVNYSVRI…ENLEVRWSKY (101 aa). Residue 385–386 coordinates cyanocob(III)alamin; the sequence is YI. C388 and C393 are disulfide-bonded. Cyanocob(III)alamin contacts are provided by residues 402–404, L411, and Y433; that span reads WEL.

It belongs to the eukaryotic cobalamin transport proteins family. Contains about 30% carbohydrates. In terms of tissue distribution, produced by the salivary glands of the oral cavity, in response to ingestion of food. Major constituent of secondary granules in neutrophils.

The protein resides in the secreted. In terms of biological role, binds vitamin B12 with femtomolar affinity and protects it from the acidic environment of the stomach. The chain is Transcobalamin-1 (TCN1) from Homo sapiens (Human).